A 580-amino-acid chain; its full sequence is Glutamine--tRNA ligase (580 aa).

The short motif at 41–51 is the 'HIGH' region element; sequence PEPNGYLHIGH. Residues 42–44 and 48–54 each bind ATP; these read EPN and HIGHAKA. L-glutamine contacts are provided by Asp-74 and Tyr-218. ATP is bound by residues Thr-237, 285-286, and 293-295; these read RL and MSK. Positions 292–296 match the 'KMSKS' region motif; the sequence is VMSKR.

Belongs to the class-I aminoacyl-tRNA synthetase family. In terms of assembly, monomer.

Its subcellular location is the cytoplasm. The enzyme catalyses tRNA(Gln) + L-glutamine + ATP = L-glutaminyl-tRNA(Gln) + AMP + diphosphate. The polypeptide is Glutamine--tRNA ligase (Xylella fastidiosa (strain M12)).